Reading from the N-terminus, the 441-residue chain is MRLSRYFMPTLRETPKEAEIVSHRLMLRAGLVRQEAAGIYAWLPLGLRVLERVCAVIRREQDRSGAVEILMPTVQSAELWRESGRYDAYGKEMLRLKDRHDREMLYGPTAEEMVTEIFRASVRSYKDLPKNLYQISWKFRDEVRPRFGTMRSREFLMKDAYSFDFDQAGARHAYNRMFVAYLRTFAGLGLKAIPMRADTGPIGGDLSHEFIILAKTGESEVFCDKAYLGFDIPPATVDFDDVAALQGIVDAWTSHYAATEEMHEPAAFAEVPEDSRMAARGIEVGHIFYFGTKYSEPMGAKVAGPDGIERPVHMGSYGIGPSRLVAAIIEASHDEAGIIWPDAVAPFDVALINLKVGDSATEAACAQIQSDLEAAGLSVLYDDRDERPGAKFATADLIGLPWQVIVGPKGLAEGKVELKRRAGGERESLATVDLLARIRRV.

This sequence belongs to the class-II aminoacyl-tRNA synthetase family. ProS type 2 subfamily. In terms of assembly, homodimer.

The protein resides in the cytoplasm. It carries out the reaction tRNA(Pro) + L-proline + ATP = L-prolyl-tRNA(Pro) + AMP + diphosphate. Catalyzes the attachment of proline to tRNA(Pro) in a two-step reaction: proline is first activated by ATP to form Pro-AMP and then transferred to the acceptor end of tRNA(Pro). In Methylobacterium radiotolerans (strain ATCC 27329 / DSM 1819 / JCM 2831 / NBRC 15690 / NCIMB 10815 / 0-1), this protein is Proline--tRNA ligase.